The following is a 127-amino-acid chain: Riboflavin kinase (127 aa).

10 to 15 (GLGEGK) is a CDP binding site. Mg(2+) contacts are provided by Thr-39 and Asn-41. Positions 96 and 104 each coordinate FMN. 109-112 (IQLR) is a binding site for CDP.

The protein belongs to the archaeal riboflavin kinase family. Requires Mg(2+) as cofactor.

It catalyses the reaction riboflavin + CTP = CDP + FMN + H(+). The protein operates within cofactor biosynthesis; FMN biosynthesis; FMN from riboflavin (CTP route): step 1/1. Catalyzes the CTP-dependent phosphorylation of riboflavin (vitamin B2) to form flavin mononucleotide (FMN). This is Riboflavin kinase from Methanococcus maripaludis (strain DSM 14266 / JCM 13030 / NBRC 101832 / S2 / LL).